The chain runs to 275 residues: Large ribosomal subunit protein uL2c (275 aa).

A disordered region spans residues 223-255 (VVMNPVDHPHGGGEGRAPIGRSRPVTPWGRPAL).

This sequence belongs to the universal ribosomal protein uL2 family. Part of the 50S ribosomal subunit.

It localises to the plastid. The protein resides in the chloroplast. In Pleurastrum terricola (Filamentous green alga), this protein is Large ribosomal subunit protein uL2c (rpl2).